A 377-amino-acid chain; its full sequence is Dihydroorotate dehydrogenase (quinone) (377 aa).

Residues 68-72 (AGFDK) and threonine 92 each bind FMN. Lysine 72 serves as a coordination point for substrate. 117–121 (NRMGF) contributes to the substrate binding site. 2 residues coordinate FMN: asparagine 149 and asparagine 182. Residue asparagine 182 coordinates substrate. The active-site Nucleophile is the serine 185. Position 187 (asparagine 187) interacts with substrate. The FMN site is built by lysine 224 and threonine 252. 253–254 (NT) is a binding site for substrate. FMN contacts are provided by residues glycine 278, glycine 307, and 328–329 (YT).

This sequence belongs to the dihydroorotate dehydrogenase family. Type 2 subfamily. Monomer. Requires FMN as cofactor.

Its subcellular location is the cell membrane. The enzyme catalyses (S)-dihydroorotate + a quinone = orotate + a quinol. The protein operates within pyrimidine metabolism; UMP biosynthesis via de novo pathway; orotate from (S)-dihydroorotate (quinone route): step 1/1. Catalyzes the conversion of dihydroorotate to orotate with quinone as electron acceptor. This is Dihydroorotate dehydrogenase (quinone) from Thermobifida fusca (strain YX).